Reading from the N-terminus, the 96-residue chain is Prokineticin Bm8-a (96 aa).

The signal sequence occupies residues 1-19; it reads MKCFAQIVVLLLVIAFSHG. Intrachain disulfides connect Cys26/Cys38, Cys32/Cys50, Cys37/Cys78, Cys60/Cys86, and Cys80/Cys95.

Belongs to the AVIT (prokineticin) family. As to expression, expressed by the skin glands.

It is found in the secreted. Functionally, potent agonist for both PKR1/PROKR1 and PKR2/PROKR2, and inducer of a potent and long-lasting hyperalgesia. Also potentiates capsaicin-induced TRPV1 current, when tested on DRG neurons. At subnanomolar concentrations, this protein both induces potent chemotaxis of macrophages and stimulates LPS-induced production of the pro-inflammatory cytokines IL-1 and IL-12. In vivo, potently stimulates the contraction of the guinea-pig gastrointestinal (GI) smooth muscle (nanomolar concentration). This chain is Prokineticin Bm8-a, found in Bombina maxima (Giant fire-bellied toad).